The primary structure comprises 222 residues: Ribonuclease 3 (222 aa).

The RNase III domain maps to Pro5 to Gly127. Glu41 contacts Mg(2+). Asp45 is an active-site residue. Mg(2+)-binding residues include Asp113 and Glu116. Residue Glu116 is part of the active site. A DRBM domain is found at Asp152–Lys221.

It belongs to the ribonuclease III family. In terms of assembly, homodimer. Mg(2+) is required as a cofactor.

The protein resides in the cytoplasm. It catalyses the reaction Endonucleolytic cleavage to 5'-phosphomonoester.. Functionally, digests double-stranded RNA. Involved in the processing of primary rRNA transcript to yield the immediate precursors to the large and small rRNAs (23S and 16S). Processes some mRNAs, and tRNAs when they are encoded in the rRNA operon. Processes pre-crRNA and tracrRNA of type II CRISPR loci if present in the organism. This Pelagibacter ubique (strain HTCC1062) protein is Ribonuclease 3.